Here is a 274-residue protein sequence, read N- to C-terminus: MAAATSTMSLLPPITQQQRWHAADSLVVLASRCHNSRRRRRCRYVVPRARLFGPAIFEASKLKVLFLGVDEEKHQHPGKLPRTYTLTHSDVTARLTLAVSHTINRAQLQGWYNKLQRDEVVAEWKKVQGHMSLHVHCHISGGHVLLDLIAGLRYYIFRKELPVVLKAFVHGDGNLFSRHPELEEATVWVYFHSNLPRFNRVECWGPLRDAGAPPEEDDAVAAAAAEEAAAEQMPAAGEWPRRCPGQCDCCFPPYSLIPWPHQHDVAAADGQPQQ.

Residues methionine 1–arginine 48 constitute a chloroplast transit peptide.

Belongs to the staygreen family. In terms of assembly, interacts with LHCII complex. Expressed in leaves, roots and developing seeds.

Its subcellular location is the plastid. The protein resides in the chloroplast membrane. It localises to the chloroplast stroma. In terms of biological role, involved in the disassembling mechanism of the intact light-harvesting complex of photosystem II (LHCII) in the thylakoid membranes. Required to trigger chlorophyll degradation during natural and dark-induced leaf senescence. The polypeptide is Protein STAY-GREEN, chloroplastic (SGR) (Oryza sativa subsp. japonica (Rice)).